We begin with the raw amino-acid sequence, 222 residues long: Ras-related protein Rab-41 (222 aa).

S41, V42, G43, K44, T45, S46, and T63 together coordinate GTP. Mg(2+) is bound at residue T45. The tract at residues 58 to 66 is switch-I; it reads CACQATVGI. Mg(2+) contacts are provided by T63 and D86. Residues G89, N144, K145, D147, S174, A175, and K176 each coordinate GTP. Residues 89–105 are switch-II; it reads GQERFHSLIPSYIRDST. C222 carries the S-geranylgeranyl cysteine lipid modification.

It belongs to the small GTPase superfamily. Rab family. It depends on Mg(2+) as a cofactor. In terms of tissue distribution, widely expressed in brain, testis, lung, heart, ovary, colon, kidney, uterus and spleen but not in liver.

It is found in the cytoplasm. The enzyme catalyses GTP + H2O = GDP + phosphate + H(+). Regulated by guanine nucleotide exchange factors (GEFs) which promote the exchange of bound GDP for free GTP. Regulated by GTPase activating proteins (GAPs) which increase the GTP hydrolysis activity. Inhibited by GDP dissociation inhibitors (GDIs). In terms of biological role, the small GTPases Rab are key regulators of intracellular membrane trafficking, from the formation of transport vesicles to their fusion with membranes. Rabs cycle between an inactive GDP-bound form and an active GTP-bound form that is able to recruit to membranes different sets of downstream effectors directly responsible for vesicle formation, movement, tethering and fusion. RAB41 is required for normal Golgi ribbon organization and ER-to-Golgi trafficking. This chain is Ras-related protein Rab-41, found in Homo sapiens (Human).